The following is a 378-amino-acid chain: Ribosomal RNA large subunit methyltransferase G (378 aa).

Belongs to the methyltransferase superfamily. RlmG family.

The protein localises to the cytoplasm. The enzyme catalyses guanosine(1835) in 23S rRNA + S-adenosyl-L-methionine = N(2)-methylguanosine(1835) in 23S rRNA + S-adenosyl-L-homocysteine + H(+). Functionally, specifically methylates the guanine in position 1835 (m2G1835) of 23S rRNA. The protein is Ribosomal RNA large subunit methyltransferase G of Shigella dysenteriae serotype 1 (strain Sd197).